The chain runs to 468 residues: Lysosomal dipeptide transporter MFSD1 (468 aa).

The interval 1–25 is disordered; the sequence is MEDEEEEARALLPGGSDEAGRETRA. Residues 11 to 12 carry the Dileucine internalization motif motif; sequence LL. The next 12 membrane-spanning stretches (helical) occupy residues 42–62, 86–106, 116–136, 138–158, 173–194, 218–238, 270–290, 307–327, 334–354, 364–384, 395–415, and 421–441; these read LAHRLVVLLLMCFLGFGSYFC, LLYAWYSWPNVVLCFFGGFLI, TIIFSCFVCIGQVVFALGGIF, AFWLMELGRFVFGIGGESLAV, LNLVFGLQLSMARIGSTVNMNL, LMIGGITCILSLVCALALAYL, WLIFIICVCYYVAIFPFIGLV, AINSVVYVISAPMSPIFGLLV, IIWVLCAVVTTLASHIMLAFT, LLGLSYSLLACALWPMVAFVV, FMQSIQNLGLAVISIIAGMIL, and LFLEVFFIACVSLSLLSVVLL.

This sequence belongs to the major facilitator superfamily. As to quaternary structure, homodimer. Interacts with lysosomal protein GLMP (via lumenal domain); the interaction starts while both proteins are still in the endoplasmic reticulum and is required for stabilization of MFSD1 in lysosomes but has no direct effect on its targeting to lysosomes or transporter activity.

The protein localises to the lysosome membrane. The catalysed reaction is L-alpha-aminoacyl-L-arginine(out) = L-alpha-aminoacyl-L-arginine(in). It carries out the reaction L-arginyl-L-alpha-amino acid(out) = L-arginyl-L-alpha-amino acid(in). The enzyme catalyses L-arginyl-glycine(out) = L-arginyl-glycine(in). It catalyses the reaction L-alpha-aminoacyl-L-lysine(out) = L-alpha-aminoacyl-L-lysine(in). The catalysed reaction is L-aspartyl-L-lysine(out) = L-aspartyl-L-lysine(in). It carries out the reaction L-alanyl-L-lysine(out) = L-alanyl-L-lysine(in). The enzyme catalyses L-lysyl-L-alpha-amino acid(out) = L-lysyl-L-alpha-amino acid(in). It catalyses the reaction L-lysyl-L-alanine(out) = L-lysyl-L-alanine(in). The catalysed reaction is L-lysyl-L-lysine(out) = L-lysyl-L-lysine(in). It carries out the reaction L-lysyl-glycine(out) = L-lysyl-glycine(in). The enzyme catalyses L-alpha-aminoacyl-L-histidine(out) = L-alpha-aminoacyl-L-histidine(in). It catalyses the reaction L-histidyl-L-alpha-amino acid(out) = L-histidyl-L-alpha-amino acid(in). The catalysed reaction is L-histidyl-glycine(out) = L-histidyl-glycine(in). Its function is as follows. Lysosomal dipeptide uniporter that selectively exports lysine, arginine or histidine-containing dipeptides with a net positive charge from the lysosome lumen into the cytosol. Could play a role in a specific type of protein O-glycosylation indirectly regulating macrophages migration and tissue invasion. Also essential for liver homeostasis. The chain is Lysosomal dipeptide transporter MFSD1 from Bos taurus (Bovine).